A 512-amino-acid chain; its full sequence is Cytochrome P450 72A15 (512 aa).

The chain crosses the membrane as a helical span at residues 2 to 22; that stretch reads EISVASVTISVVLAVVSWWIW. Cys460 provides a ligand contact to heme.

The protein belongs to the cytochrome P450 family. The cofactor is heme.

Its subcellular location is the membrane. The protein is Cytochrome P450 72A15 (CYP72A15) of Arabidopsis thaliana (Mouse-ear cress).